We begin with the raw amino-acid sequence, 201 residues long: Peptidyl-prolyl cis-trans isomerase CYP19-4 (201 aa).

Positions 1–23 (MAKASFILLGTLFLFGAIASIQA) are cleaved as a signal peptide. In terms of domain architecture, PPIase cyclophilin-type spans 35–198 (YFDVEIDGKS…SKVVIADSGE (164 aa)).

This sequence belongs to the cyclophilin-type PPIase family. Interacts with EMB30/GNOM. As to expression, ubiquitous, mostly in aerial organs (at protein level).

The protein localises to the cytoplasm. The protein resides in the membrane. Its subcellular location is the endoplasmic reticulum. It localises to the secreted. It catalyses the reaction [protein]-peptidylproline (omega=180) = [protein]-peptidylproline (omega=0). Its activity is regulated as follows. Binds cyclosporin A (CsA). CsA mediates some of its effects via an inhibitory action on PPIase. Functionally, PPIases accelerate the folding of proteins. It catalyzes the cis-trans isomerization of proline imidic peptide bonds in oligopeptides. May be involved during embryogenesis and organ development by regulating the folding of EMB30/GNOM, and thus, by modulating its activity. This is Peptidyl-prolyl cis-trans isomerase CYP19-4 (CYP19-4) from Arabidopsis thaliana (Mouse-ear cress).